Consider the following 20-residue polypeptide: Ranalexin-1Cb (20 aa).

The cysteines at positions 14 and 20 are disulfide-linked.

As to expression, expressed by the skin glands.

Its subcellular location is the secreted. Antibacterial activity against Gram-positive bacterium S.aureus and Gram-negative bacterium E.coli. Has activity against C.albicans. The sequence is that of Ranalexin-1Cb from Lithobates clamitans (Green frog).